Here is a 285-residue protein sequence, read N- to C-terminus: Bifunctional protein FolD (285 aa).

NADP(+) contacts are provided by residues 165-167 (GRS) and serine 190.

The protein belongs to the tetrahydrofolate dehydrogenase/cyclohydrolase family. Homodimer.

It catalyses the reaction (6R)-5,10-methylene-5,6,7,8-tetrahydrofolate + NADP(+) = (6R)-5,10-methenyltetrahydrofolate + NADPH. It carries out the reaction (6R)-5,10-methenyltetrahydrofolate + H2O = (6R)-10-formyltetrahydrofolate + H(+). It participates in one-carbon metabolism; tetrahydrofolate interconversion. Catalyzes the oxidation of 5,10-methylenetetrahydrofolate to 5,10-methenyltetrahydrofolate and then the hydrolysis of 5,10-methenyltetrahydrofolate to 10-formyltetrahydrofolate. The polypeptide is Bifunctional protein FolD (Staphylococcus saprophyticus subsp. saprophyticus (strain ATCC 15305 / DSM 20229 / NCIMB 8711 / NCTC 7292 / S-41)).